Here is a 241-residue protein sequence, read N- to C-terminus: MAEIKYKRILLKLSGEAFKGATGYGIDIPTVRNIAQEIKHICLMGVEVAIVVGGGNIWRGATAAKEGIDRVSADYAGMLATIINAITLQDALEREGIVTRTQSALSVQQVAEPYIRRRAVRHLEKGRVVIFAGGTGNPYMTTDTAAALRAIEIEASVLLMAKNKVDGVYTADPQKHPEATLFQHLTYMEAINKRLQVMDATALSLCLDNKLPIIVFDLQSSESLVSAISGQPIGTLISSES.

An ATP-binding site is contributed by Lys-12–Gly-15. Residues Gly-20 to Gly-25 are involved in allosteric activation by GTP. A UMP-binding site is contributed by Gly-54. ATP contacts are provided by Gly-55 and Arg-59. Residues Asp-74 and Thr-135–Thr-142 each bind UMP. Residues Asn-163, Tyr-169, and Asp-172 each coordinate ATP.

The protein belongs to the UMP kinase family. As to quaternary structure, homohexamer.

It localises to the cytoplasm. It catalyses the reaction UMP + ATP = UDP + ADP. Its pathway is pyrimidine metabolism; CTP biosynthesis via de novo pathway; UDP from UMP (UMPK route): step 1/1. With respect to regulation, allosterically activated by GTP. Inhibited by UTP. Its function is as follows. Catalyzes the reversible phosphorylation of UMP to UDP. The protein is Uridylate kinase of Dehalococcoides mccartyi (strain CBDB1).